Reading from the N-terminus, the 475-residue chain is BTB/POZ domain-containing protein 10 (475 aa).

Residues 1–143 (MAGRPHPYDG…SSQSSSDGSC (143 aa)) are disordered. The span at 22–31 (LHSRPRKLYK) shows a compositional bias: basic residues. The span at 57–80 (GHERSRDRRRSSDRSRDSSHERTE) shows a compositional bias: basic and acidic residues. Over residues 81-94 (SQLTPCIRNVTSPT) the composition is skewed to polar residues. The span at 97-107 (HHVEREKDHSS) shows a compositional bias: basic and acidic residues. Residues 108-142 (SRPSSPRPQKASPNGSISSAGNSSRNSSQSSSDGS) show a composition bias toward low complexity. Residues 146 to 475 (AGEMVFVYEN…LDPDAQNPTL (330 aa)) are interaction with AKT family members. The BTB domain occupies 167–241 (ERVTLIVDNT…YKTGIIRCPD (75 aa)). The disordered stretch occupies residues 456-475 (PIHPPSGNSDLDPDAQNPTL).

Interacts (via C-terminal 330-amino-acid region) with AKT1; AKT2 and AKT3. Interacts with PPP2CA and PPP1CA.

It localises to the nucleus. The protein localises to the cytoplasm. Its function is as follows. Plays a major role as an activator of AKT family members by inhibiting PPP2CA-mediated dephosphorylation, thereby keeping AKTs activated. Plays a role in preventing motor neuronal death and in accelerating the growth of pancreatic beta cells. The polypeptide is BTB/POZ domain-containing protein 10 (BTBD10) (Pongo abelii (Sumatran orangutan)).